We begin with the raw amino-acid sequence, 344 residues long: Anthranilate phosphoribosyltransferase (344 aa).

5-phospho-alpha-D-ribose 1-diphosphate is bound by residues glycine 80, 83-84 (GD), threonine 88, 90-93 (NIST), 108-116 (KHGNRSISS), and serine 120. Position 80 (glycine 80) interacts with anthranilate. Serine 92 contacts Mg(2+). Residue asparagine 111 coordinates anthranilate. Residue arginine 166 participates in anthranilate binding. The Mg(2+) site is built by aspartate 229 and glutamate 230.

It belongs to the anthranilate phosphoribosyltransferase family. Homodimer. The cofactor is Mg(2+).

It carries out the reaction N-(5-phospho-beta-D-ribosyl)anthranilate + diphosphate = 5-phospho-alpha-D-ribose 1-diphosphate + anthranilate. It functions in the pathway amino-acid biosynthesis; L-tryptophan biosynthesis; L-tryptophan from chorismate: step 2/5. Catalyzes the transfer of the phosphoribosyl group of 5-phosphorylribose-1-pyrophosphate (PRPP) to anthranilate to yield N-(5'-phosphoribosyl)-anthranilate (PRA). The chain is Anthranilate phosphoribosyltransferase from Chloroherpeton thalassium (strain ATCC 35110 / GB-78).